A 355-amino-acid polypeptide reads, in one-letter code: Guanine nucleotide-binding protein G(i) subunit alpha (355 aa).

Gly2 carries N-myristoyl glycine lipidation. A lipid anchor (S-palmitoyl cysteine) is attached at Cys3. The G-alpha domain occupies 33-355 (REVKLLLLGA…KNNLKDCGLF (323 aa)). Residues 36-49 (KLLLLGAGESGKST) are G1 motif. GTP-binding positions include 41–48 (GAGESGKS), 176–182 (LRTRVKT), 201–205 (DVGGQ), 270–273 (NKKD), and Ala327. 2 residues coordinate Mg(2+): Ser48 and Thr182. The interval 174–182 (DVLRTRVKT) is G2 motif. A G3 motif region spans residues 197–206 (FKLFDVGGQR). The tract at residues 266 to 273 (ILFLNKKD) is G4 motif. Positions 325 to 330 (TCATDT) are G5 motif.

The protein belongs to the G-alpha family. G(i/o/t/z) subfamily. In terms of assembly, g proteins are composed of 3 units; alpha, beta and gamma. The alpha chain contains the guanine nucleotide binding site.

Its function is as follows. Guanine nucleotide-binding proteins (G proteins) are involved as modulators or transducers in various transmembrane signaling systems. In Homarus americanus (American lobster), this protein is Guanine nucleotide-binding protein G(i) subunit alpha.